We begin with the raw amino-acid sequence, 574 residues long: Avenacosidase 1 (574 aa).

The N-terminal 55 residues, Met1 to Ser55, are a transit peptide targeting the chloroplast. A beta-D-glucoside contacts are provided by residues Gln88, His192, and Asn237–Glu238. Glu238 serves as the catalytic Proton donor. A disulfide bridge connects residues Cys258 and Cys264. A beta-D-glucoside contacts are provided by residues Tyr381, Glu454, Trp505, Glu512–Trp513, and Phe521. Glu454 acts as the Nucleophile in catalysis.

The protein belongs to the glycosyl hydrolase 1 family. In terms of assembly, homo- and heteromultimer with P60B in a 1:1 stoichiometry. Aggregates to form the fibrillar stromacentre. Expressed in caryopses, coleoptiles, primary leaves, and etiolated and green seedlings, but not in roots.

It localises to the plastid. The protein localises to the chloroplast stroma. The enzyme catalyses avenacoside B + H2O = 26-desgluco-avenacoside B + D-glucose. Its activity is regulated as follows. Inhibited by N-(3-Dimethylaminopropyl)-N'-ethylcarbodiimide hydrochloride (EDC). Its function is as follows. Beta-glucosidase acting as a preformed defense system. Hydrolyzes the bisdesmosides avenacosides A and B to 26-desgluco-avenacosides exhibiting fungicidal activity. Can use beta-fucoside &gt; beta-glucoside &gt; beta-galactoside &gt; beta-xyloside as substrates, but not alpha-glycosides, beta-thioglucosides and disaccharides. The protein is Avenacosidase 1 (P60A) of Avena sativa (Oat).